The sequence spans 411 residues: Argininosuccinate lyase (411 aa).

This sequence belongs to the lyase 1 family. Argininosuccinate lyase subfamily.

It is found in the cytoplasm. It carries out the reaction 2-(N(omega)-L-arginino)succinate = fumarate + L-arginine. The protein operates within amino-acid biosynthesis; L-arginine biosynthesis; L-arginine from L-ornithine and carbamoyl phosphate: step 3/3. The protein is Argininosuccinate lyase of Legionella pneumophila (strain Paris).